The following is a 611-amino-acid chain: Lanthanide-dependent methanol dehydrogenase (611 aa).

A signal peptide spans 1–34; it reads MTVKLKKPKKYAVAKNATLLAAFGLIGSLSLAKA. Cys138 and Cys139 are disulfide-bonded. Residues Arg144, Thr188, Ser203, Gly204, and Gly205 each coordinate pyrroloquinoline quinone. A Ce(3+)-binding site is contributed by Glu206. Residue Glu206 participates in Eu(3+) binding. Pyrroloquinoline quinone is bound by residues Thr270 and Trp272. The Ce(3+) site is built by Asn290, Asp333, and Asp335. 3 residues coordinate Eu(3+): Asn290, Asp333, and Asp335. Arg360 is a pyrroloquinoline quinone binding site. An intrachain disulfide couples Cys414 to Cys443. Residues Trp501 and Trp566 each coordinate pyrroloquinoline quinone.

It belongs to the bacterial PQQ dehydrogenase family. In terms of assembly, homodimer. It depends on Ce(3+) as a cofactor. The cofactor is La(3+). Nd(3+) is required as a cofactor. Requires Pr(3+) as cofactor. Eu(3+) serves as cofactor. It depends on pyrroloquinoline quinone as a cofactor.

The protein resides in the periplasm. The enzyme catalyses 2 Fe(III)-[cytochrome cL] + methanol = 2 Fe(II)-[cytochrome cL] + formaldehyde + 2 H(+). The catalysed reaction is 4 Fe(III)-[cytochrome cL] + methanol + H2O = 4 Fe(II)-[cytochrome cL] + formate + 5 H(+). It carries out the reaction 2 Fe(III)-[cytochrome cL] + a primary alcohol = 2 Fe(II)-[cytochrome cL] + an aldehyde + 2 H(+). Its pathway is one-carbon metabolism; methanol degradation. Functionally, catalyzes the oxidation of methanol to formaldehyde or formate in the presence of lanthanides (Ln). Is a key enzyme in methane/methanol metabolism, allowing M.fumariolicum to grow on methane as the sole carbon and energy source. Can also act on other primary alcohols in vitro, such as ethanol, 1-propanol, 1-butanol, and 1-hexanol, but is not able to oxidize secondary alcohols and acetaldehyde. Uses a specific cytochrome cL, encoded by the adjacent gene in the locus, as electron acceptor. In Methylacidiphilum fumariolicum (strain SolV), this protein is Lanthanide-dependent methanol dehydrogenase.